A 251-amino-acid polypeptide reads, in one-letter code: 3-deoxy-manno-octulosonate cytidylyltransferase (251 aa).

This sequence belongs to the KdsB family.

The protein localises to the cytoplasm. The enzyme catalyses 3-deoxy-alpha-D-manno-oct-2-ulosonate + CTP = CMP-3-deoxy-beta-D-manno-octulosonate + diphosphate. Its pathway is nucleotide-sugar biosynthesis; CMP-3-deoxy-D-manno-octulosonate biosynthesis; CMP-3-deoxy-D-manno-octulosonate from 3-deoxy-D-manno-octulosonate and CTP: step 1/1. The protein operates within bacterial outer membrane biogenesis; lipopolysaccharide biosynthesis. Functionally, activates KDO (a required 8-carbon sugar) for incorporation into bacterial lipopolysaccharide in Gram-negative bacteria. The sequence is that of 3-deoxy-manno-octulosonate cytidylyltransferase from Brucella abortus (strain 2308).